The chain runs to 228 residues: Cutinase (228 aa).

The N-terminal stretch at M1–A16 is a signal peptide. An intrachain disulfide couples C49 to C129. Catalysis depends on S140, which acts as the Nucleophile. C191 and C198 are oxidised to a cystine. Residue D195 is part of the active site. H208 (proton donor/acceptor) is an active-site residue.

It belongs to the cutinase family. In terms of processing, the 2 disulfide bonds play a critical role in holding the catalytic residues in juxta-position; reduction of the disulfide bridges results in the complete inactivation of the enzyme.

The protein resides in the secreted. The catalysed reaction is cutin + H2O = cutin monomers.. Partially inhibited by berberine; higher inhibitory effects are observed with longer chain polyester substrates. In terms of biological role, catalyzes the hydrolysis of complex carboxylic polyesters found in the cell wall of plants. Degrades cutin, a macromolecule that forms the structure of the plant cuticle. Allows pathogenic fungi to penetrate through the cuticular barrier into the host plant during the initial stage of fungal infection. The polypeptide is Cutinase (CUTA) (Colletotrichum truncatum (Anthracnose fungus)).